The sequence spans 444 residues: UDP-N-acetylmuramate--L-alanine ligase (444 aa).

Residue 110-116 participates in ATP binding; sequence GAHGKTS.

This sequence belongs to the MurCDEF family.

The protein resides in the cytoplasm. The catalysed reaction is UDP-N-acetyl-alpha-D-muramate + L-alanine + ATP = UDP-N-acetyl-alpha-D-muramoyl-L-alanine + ADP + phosphate + H(+). It participates in cell wall biogenesis; peptidoglycan biosynthesis. Functionally, cell wall formation. The chain is UDP-N-acetylmuramate--L-alanine ligase from Streptococcus pneumoniae (strain P1031).